The primary structure comprises 1054 residues: Topoisomerase 1-associated factor 1 (1054 aa).

Disordered stretches follow at residues 522-543 (KADDTGNVEDLESLPGEEHESA), 823-846 (RDDKERRGAGGDKEGSQDAEEDDE), 865-953 (EMFA…TINL), and 968-1054 (VSDG…DDDE). Residues 823 to 838 (RDDKERRGAGGDKEGS) are compositionally biased toward basic and acidic residues. Basic residues predominate over residues 877-887 (KTKQKLKRKGT). 3 stretches are compositionally biased toward basic and acidic residues: residues 890–901 (STREREKQRDYT), 928–953 (ERDRKFFEKENELREELRKAEPTINL), and 979–1017 (TESHKQYREKVDEDRDDLSHMAERENRQYDFGDEGHDSD).

This sequence belongs to the timeless family. As to quaternary structure, component of the fork protection complex (FPC) consisting of TOF1 and CSM3.

The protein resides in the nucleus. Functionally, forms a fork protection complex (FPC) with CSM3 and which is required for chromosome segregation during meiosis and DNA damage repair. FPC coordinates leading and lagging strand synthesis and moves with the replication fork. FPC stabilizes replication forks in a configuration that is recognized by replication checkpoint sensors. The sequence is that of Topoisomerase 1-associated factor 1 (TOF1) from Yarrowia lipolytica (strain CLIB 122 / E 150) (Yeast).